The primary structure comprises 591 residues: V-type ATP synthase alpha chain (591 aa).

242-249 (GPFGAGKT) contributes to the ATP binding site.

It belongs to the ATPase alpha/beta chains family.

It catalyses the reaction ATP + H2O + 4 H(+)(in) = ADP + phosphate + 5 H(+)(out). Functionally, produces ATP from ADP in the presence of a proton gradient across the membrane. The V-type alpha chain is a catalytic subunit. The polypeptide is V-type ATP synthase alpha chain (atpA) (Chlamydia pneumoniae (Chlamydophila pneumoniae)).